Here is a 144-residue protein sequence, read N- to C-terminus: uncharacterized protein (144 aa).

The segment at 98–127 is disordered; that stretch reads PLADGATVDSQASENGEKEAQPTPPKEGLL.

This is an uncharacterized protein from Aedes vexans (Inland floodwater mosquito).